Consider the following 288-residue polypeptide: Mortality factor 4-like protein 2 (288 aa).

Over residues 1 to 15 (MSSRKQGSQPRGQQS) the composition is skewed to polar residues. Positions 1 to 113 (MSSRKQGSQP…RADPTVESEE (113 aa)) are disordered. Position 71 is a phosphoserine (Ser71). In terms of domain architecture, MRG spans 117–288 (NRMEVKVKIP…ASAEYHRKAL (172 aa)).

As to quaternary structure, component of the NuA4 histone acetyltransferase complex which contains the catalytic subunit KAT5/TIP60 and the subunits EP400, TRRAP/PAF400, BRD8/SMAP, EPC1, DMAP1/DNMAP1, RUVBL1/TIP49, RUVBL2, ING3, actin, ACTL6A/BAF53A, MORF4L1/MRG15, MORF4L2/MRGX, MRGBP, YEATS4/GAS41 and VPS72/YL1. The NuA4 complex interacts with MYC and the adenovirus E1A protein. MORF4L1 may also participate in the formation of NuA4 related complexes which lack the KAT5/TIP60 catalytic subunit, but which include the SWI/SNF related protein SRCAP. Component of the MSIN3A histone deacetylase complex, which includes SIN3A, HDAC2, ARID4B, MORF4L1, RBBP4/RbAp48, and RBBP7/RbAp46. Interacts with MRFAP1 and RB1. May also interact with one or more as yet undefined members of the TLE (transducin-like enhancer of split) family of transcriptional repressors.

It is found in the nucleus. Functionally, component of the NuA4 histone acetyltransferase complex which is involved in transcriptional activation of select genes principally by acetylation of nucleosomal histone H4 and H2A. This modification may both alter nucleosome - DNA interactions and promote interaction of the modified histones with other proteins which positively regulate transcription. This complex may be required for the activation of transcriptional programs associated with oncogene and proto-oncogene mediated growth induction, tumor suppressor mediated growth arrest and replicative senescence, apoptosis, and DNA repair. The NuA4 complex ATPase and helicase activities seem to be, at least in part, contributed by the association of RUVBL1 and RUVBL2 with EP400. NuA4 may also play a direct role in DNA repair when directly recruited to sites of DNA damage. Also a component of the MSIN3A complex which acts to repress transcription by deacetylation of nucleosomal histones. This is Mortality factor 4-like protein 2 (MORF4L2) from Homo sapiens (Human).